Reading from the N-terminus, the 464-residue chain is D-inositol 3-phosphate glycosyltransferase (464 aa).

The span at 1-20 (MEGAPRRPDRHARSEEERHV) shows a compositional bias: basic and acidic residues. The tract at residues 1 to 44 (MEGAPRRPDRHARSEEERHVSQYASRLGRRSPAAPTRRRMLRKP) is disordered. A 1D-myo-inositol 3-phosphate-binding site is contributed by His-53. Residues 59–60 (QP) and Gly-67 each bind UDP-N-acetyl-alpha-D-glucosamine. Residues 64 to 69 (DAGGMN), Lys-122, Tyr-155, Thr-179, and Arg-199 each bind 1D-myo-inositol 3-phosphate. UDP-N-acetyl-alpha-D-glucosamine-binding residues include Arg-274, Lys-279, and Val-340. 3 residues coordinate Mg(2+): Phe-349, Arg-350, and Ala-352. Positions 362 and 370 each coordinate UDP-N-acetyl-alpha-D-glucosamine. Residue Thr-376 coordinates Mg(2+).

It belongs to the glycosyltransferase group 1 family. MshA subfamily. In terms of assembly, homodimer.

The catalysed reaction is 1D-myo-inositol 3-phosphate + UDP-N-acetyl-alpha-D-glucosamine = 1D-myo-inositol 2-acetamido-2-deoxy-alpha-D-glucopyranoside 3-phosphate + UDP + H(+). Its function is as follows. Catalyzes the transfer of a N-acetyl-glucosamine moiety to 1D-myo-inositol 3-phosphate to produce 1D-myo-inositol 2-acetamido-2-deoxy-glucopyranoside 3-phosphate in the mycothiol biosynthesis pathway. The polypeptide is D-inositol 3-phosphate glycosyltransferase (Streptomyces avermitilis (strain ATCC 31267 / DSM 46492 / JCM 5070 / NBRC 14893 / NCIMB 12804 / NRRL 8165 / MA-4680)).